The following is a 288-amino-acid chain: 33 kDa chaperonin (288 aa).

2 disulfide bridges follow: cysteine 235–cysteine 237 and cysteine 268–cysteine 271.

Belongs to the HSP33 family. Under oxidizing conditions two disulfide bonds are formed involving the reactive cysteines. Under reducing conditions zinc is bound to the reactive cysteines and the protein is inactive.

It localises to the cytoplasm. Redox regulated molecular chaperone. Protects both thermally unfolding and oxidatively damaged proteins from irreversible aggregation. Plays an important role in the bacterial defense system toward oxidative stress. This is 33 kDa chaperonin from Streptococcus thermophilus (strain ATCC BAA-491 / LMD-9).